The chain runs to 260 residues: Translation initiation factor 2 subunit alpha (260 aa).

The 72-residue stretch at 12-83 folds into the S1 motif domain; sequence GDLIVGTVHK…KKGHVDASLK (72 aa).

This sequence belongs to the eIF-2-alpha family. As to quaternary structure, heterotrimer composed of an alpha, a beta and a gamma chain.

Its function is as follows. eIF-2 functions in the early steps of protein synthesis by forming a ternary complex with GTP and initiator tRNA. This chain is Translation initiation factor 2 subunit alpha, found in Methanosphaera stadtmanae (strain ATCC 43021 / DSM 3091 / JCM 11832 / MCB-3).